The sequence spans 268 residues: Putative esterase/lipase 2 (268 aa).

His-28 is a catalytic residue. His-96 serves as the catalytic Charge relay system.

It belongs to the lipase/esterase LIP3/BchO family.

This chain is Putative esterase/lipase 2, found in Mycoplasma pneumoniae (strain ATCC 29342 / M129 / Subtype 1) (Mycoplasmoides pneumoniae).